Here is a 175-residue protein sequence, read N- to C-terminus: ATP synthase subunit delta (175 aa).

Belongs to the ATPase delta chain family. As to quaternary structure, F-type ATPases have 2 components, F(1) - the catalytic core - and F(0) - the membrane proton channel. F(1) has five subunits: alpha(3), beta(3), gamma(1), delta(1), epsilon(1). F(0) has three main subunits: a(1), b(2) and c(10-14). The alpha and beta chains form an alternating ring which encloses part of the gamma chain. F(1) is attached to F(0) by a central stalk formed by the gamma and epsilon chains, while a peripheral stalk is formed by the delta and b chains.

The protein localises to the cell inner membrane. In terms of biological role, f(1)F(0) ATP synthase produces ATP from ADP in the presence of a proton or sodium gradient. F-type ATPases consist of two structural domains, F(1) containing the extramembraneous catalytic core and F(0) containing the membrane proton channel, linked together by a central stalk and a peripheral stalk. During catalysis, ATP synthesis in the catalytic domain of F(1) is coupled via a rotary mechanism of the central stalk subunits to proton translocation. Its function is as follows. This protein is part of the stalk that links CF(0) to CF(1). It either transmits conformational changes from CF(0) to CF(1) or is implicated in proton conduction. This chain is ATP synthase subunit delta, found in Xanthomonas axonopodis pv. citri (strain 306).